We begin with the raw amino-acid sequence, 453 residues long: Tol-Pal system protein TolB (453 aa).

The signal sequence occupies residues 1–39 (MSFIPNTEAEALSALFSRRSVLGATAAGGLLATPLAAFA).

Belongs to the TolB family. The Tol-Pal system is composed of five core proteins: the inner membrane proteins TolA, TolQ and TolR, the periplasmic protein TolB and the outer membrane protein Pal. They form a network linking the inner and outer membranes and the peptidoglycan layer.

It localises to the periplasm. Functionally, part of the Tol-Pal system, which plays a role in outer membrane invagination during cell division and is important for maintaining outer membrane integrity. The chain is Tol-Pal system protein TolB from Gluconobacter oxydans (strain 621H) (Gluconobacter suboxydans).